A 190-amino-acid polypeptide reads, in one-letter code: Peptidyl-tRNA hydrolase (190 aa).

Residue Tyr-18 coordinates tRNA. Residue His-23 is the Proton acceptor of the active site. TRNA is bound by residues Phe-69, Asn-71, and Asn-117.

The protein belongs to the PTH family. As to quaternary structure, monomer.

The protein localises to the cytoplasm. It carries out the reaction an N-acyl-L-alpha-aminoacyl-tRNA + H2O = an N-acyl-L-amino acid + a tRNA + H(+). Hydrolyzes ribosome-free peptidyl-tRNAs (with 1 or more amino acids incorporated), which drop off the ribosome during protein synthesis, or as a result of ribosome stalling. Its function is as follows. Catalyzes the release of premature peptidyl moieties from peptidyl-tRNA molecules trapped in stalled 50S ribosomal subunits, and thus maintains levels of free tRNAs and 50S ribosomes. The polypeptide is Peptidyl-tRNA hydrolase (Rhodococcus opacus (strain B4)).